The chain runs to 528 residues: GMP synthase [glutamine-hydrolyzing] (528 aa).

The Glutamine amidotransferase type-1 domain occupies 13-204 (AIVILDFGSQ…VNHICGCEQD (192 aa)). Catalysis depends on Cys90, which acts as the Nucleophile. Active-site residues include His178 and Glu180. Residues 205–403 (WTTNAFIDEA…LGLPEEIVRR (199 aa)) enclose the GMPS ATP-PPase domain. ATP is bound at residue 232–238 (SGGVDSS).

Homodimer.

It carries out the reaction XMP + L-glutamine + ATP + H2O = GMP + L-glutamate + AMP + diphosphate + 2 H(+). The protein operates within purine metabolism; GMP biosynthesis; GMP from XMP (L-Gln route): step 1/1. Functionally, catalyzes the synthesis of GMP from XMP. This is GMP synthase [glutamine-hydrolyzing] from Synechococcus sp. (strain CC9902).